The primary structure comprises 499 residues: Glutamyl-tRNA(Gln) amidotransferase subunit A (499 aa).

Residues Lys76 and Ser151 each act as charge relay system in the active site. Catalysis depends on Ser175, which acts as the Acyl-ester intermediate.

Belongs to the amidase family. GatA subfamily. As to quaternary structure, heterotrimer of A, B and C subunits.

It carries out the reaction L-glutamyl-tRNA(Gln) + L-glutamine + ATP + H2O = L-glutaminyl-tRNA(Gln) + L-glutamate + ADP + phosphate + H(+). Functionally, allows the formation of correctly charged Gln-tRNA(Gln) through the transamidation of misacylated Glu-tRNA(Gln) in organisms which lack glutaminyl-tRNA synthetase. The reaction takes place in the presence of glutamine and ATP through an activated gamma-phospho-Glu-tRNA(Gln). In Rhodopirellula baltica (strain DSM 10527 / NCIMB 13988 / SH1), this protein is Glutamyl-tRNA(Gln) amidotransferase subunit A.